The sequence spans 402 residues: MAQDRKKVLVLGAGYAGLQTITKLQKQISADEAEVTLINKNDYHYEATWLHEASAGTISYEDLLYPVESVVNKDKVNFVKAEVTKIDRNAKKVETDAGIFDFDILVVSLGFESETFGIKGMKDYAFQIENVLTARKLSRHIEDKFANYASSKQKDDKDLAIIVGGAGFTGVEFLGELTDRIPELCNKYGVEQSKVKITCVEAAPKMLPMFSDELVNHAVNYLENKGVEFKIGTPIVAANEKGFVVKVNDEEQQLEANTVVWAAGVRGSKLMEESFEGVKRGRIVTKQDLTIEGYDDIFVIGDCSAFIPAGEERPLPTTAQIATQQGEHTAKNVKNILEGQPTNEFEYVDRGTVCSLGAHDGVGVVYGRDIQGKKAAFMKKVIDTRAVFKLGGIGLAFKKGKF.

FAD is bound by residues 12-16, 39-40, and V83; these read GAGYA and NK. The active site involves E172. FAD-binding positions include D302, 319-320, and K379; that span reads AQ.

The protein belongs to the NADH dehydrogenase family. FAD serves as cofactor.

It is found in the cell membrane. It carries out the reaction a quinone + NADH + H(+) = a quinol + NAD(+). Functionally, alternative, nonproton pumping NADH:quinone oxidoreductase that delivers electrons to the respiratory chain by oxidation of NADH and reduction of quinones, and contributes to the regeneration of NAD(+). This chain is Type II NADH:quinone oxidoreductase, found in Staphylococcus saprophyticus subsp. saprophyticus (strain ATCC 15305 / DSM 20229 / NCIMB 8711 / NCTC 7292 / S-41).